Here is a 791-residue protein sequence, read N- to C-terminus: Vezatin (791 aa).

2 consecutive transmembrane segments (helical) span residues 138–158 (IATP…ALAA) and 163–183 (SISS…FTVL). A coiled-coil region spans residues 435-464 (VRSLQLHLKALLNEVIILEDELEKLSSCKE). Residues 752–769 (GDEWDDDDDDNDNDDDNY) are compositionally biased toward acidic residues. Positions 752–791 (GDEWDDDDDDNDNDDDNYDQVKNVESHEKERNNVSLQLEE) are disordered. Basic and acidic residues predominate over residues 773 to 783 (KNVESHEKERN).

This sequence belongs to the vezatin family. Interacts with myosin VIIa and the cadherin-catenins complex.

The protein resides in the cell membrane. Its subcellular location is the cell junction. The protein localises to the adherens junction. It is found in the nucleus. Its function is as follows. Plays a pivotal role in the establishment of adherens junctions and their maintenance in adult life. This chain is Vezatin (vezt), found in Xenopus tropicalis (Western clawed frog).